Reading from the N-terminus, the 86-residue chain is Exodeoxyribonuclease 7 small subunit (86 aa).

The tract at residues 1–26 (MQDELFETEKAPQKNTKNAKNAPKKS) is disordered.

This sequence belongs to the XseB family. As to quaternary structure, heterooligomer composed of large and small subunits.

Its subcellular location is the cytoplasm. It carries out the reaction Exonucleolytic cleavage in either 5'- to 3'- or 3'- to 5'-direction to yield nucleoside 5'-phosphates.. Bidirectionally degrades single-stranded DNA into large acid-insoluble oligonucleotides, which are then degraded further into small acid-soluble oligonucleotides. The sequence is that of Exodeoxyribonuclease 7 small subunit from Helicobacter pylori (strain Shi470).